The sequence spans 398 residues: Probable transcription factor PosF21 (398 aa).

Disordered stretches follow at residues 1 to 46 (MDKE…HDIS) and 112 to 150 (ATSSAQVGEPSGTAWKNETMMQTGTGSTSNPQNTVNSLG). The span at 7–19 (PAPPCGGLPPPSP) shows a compositional bias: pro residues. A compositionally biased stretch (polar residues) spans 125-148 (AWKNETMMQTGTGSTSNPQNTVNS). Residues 201-264 (DPKRAKRIWA…NGLTVENNEL (64 aa)) enclose the bZIP domain. The interval 203-224 (KRAKRIWANRQSAARSKERKTR) is basic motif. The leucine-zipper stretch occupies residues 229–264 (LERKVQTLQTEATTLSAQLTLLQRDTNGLTVENNEL).

It belongs to the bZIP family.

It localises to the nucleus. Putative transcription factor with an activatory role. This is Probable transcription factor PosF21 (POSF21) from Arabidopsis thaliana (Mouse-ear cress).